A 317-amino-acid chain; its full sequence is Ribosomal lysine N-methyltransferase 5 (317 aa).

S-adenosyl-L-methionine contacts are provided by residues W87, 141 to 143 (GSG), D163, W214, and L237.

The protein belongs to the class I-like SAM-binding methyltransferase superfamily. RKM5 family.

Functionally, S-adenosyl-L-methionine-dependent protein-lysine N-methyltransferase that methylates 60S ribosomal protein L1. In Eremothecium gossypii (strain ATCC 10895 / CBS 109.51 / FGSC 9923 / NRRL Y-1056) (Yeast), this protein is Ribosomal lysine N-methyltransferase 5 (RKM5).